A 335-amino-acid chain; its full sequence is Mevalonate kinase (335 aa).

An ATP-binding site is contributed by 111–121 (PVGAGLGSSAA). The active-site Proton acceptor is the aspartate 162.

This sequence belongs to the GHMP kinase family. Mevalonate kinase subfamily. As to quaternary structure, homodimer. It depends on Mg(2+) as a cofactor.

Its subcellular location is the cytoplasm. It catalyses the reaction (R)-mevalonate + ATP = (R)-5-phosphomevalonate + ADP + H(+). It participates in isoprenoid biosynthesis; isopentenyl diphosphate biosynthesis via mevalonate pathway; isopentenyl diphosphate from (R)-mevalonate: step 1/3. Catalyzes the phosphorylation of (R)-mevalonate (MVA) to (R)-mevalonate 5-phosphate (MVAP). Functions in the mevalonate (MVA) pathway leading to isopentenyl diphosphate (IPP), a key precursor for the biosynthesis of isoprenoid compounds such as archaeal membrane lipids. This Pyrococcus abyssi (strain GE5 / Orsay) protein is Mevalonate kinase.